The chain runs to 338 residues: Glycerol-3-phosphate dehydrogenase [NAD(P)+] (338 aa).

Residues serine 12, tryptophan 13, and lysine 110 each contribute to the NADPH site. 3 residues coordinate sn-glycerol 3-phosphate: lysine 110, glycine 141, and serine 143. Alanine 145 is a binding site for NADPH. Sn-glycerol 3-phosphate contacts are provided by lysine 196, aspartate 249, serine 259, arginine 260, and asparagine 261. The active-site Proton acceptor is lysine 196. NADPH is bound at residue arginine 260. Residues valine 284 and glutamate 286 each contribute to the NADPH site.

It belongs to the NAD-dependent glycerol-3-phosphate dehydrogenase family.

The protein resides in the cytoplasm. It catalyses the reaction sn-glycerol 3-phosphate + NAD(+) = dihydroxyacetone phosphate + NADH + H(+). The enzyme catalyses sn-glycerol 3-phosphate + NADP(+) = dihydroxyacetone phosphate + NADPH + H(+). The protein operates within membrane lipid metabolism; glycerophospholipid metabolism. Catalyzes the reduction of the glycolytic intermediate dihydroxyacetone phosphate (DHAP) to sn-glycerol 3-phosphate (G3P), the key precursor for phospholipid synthesis. This chain is Glycerol-3-phosphate dehydrogenase [NAD(P)+], found in Lactiplantibacillus plantarum (strain ATCC BAA-793 / NCIMB 8826 / WCFS1) (Lactobacillus plantarum).